We begin with the raw amino-acid sequence, 286 residues long: Large ribosomal subunit protein uL2 (286 aa).

Disordered stretches follow at residues 22 to 59 and 215 to 286; these read KELTPGYTPERSLLRPKTKTGGRNNQGKITSRHRGGGH and LGRR…KLHK. Basic and acidic residues predominate over residues 230-240; that stretch reads DHPHGGGEGRT. Over residues 255-286 the composition is skewed to basic residues; the sequence is KGGRTRQKRKPSNSSIVRRRKSRRYGQLKLHK.

This sequence belongs to the universal ribosomal protein uL2 family. Part of the 50S ribosomal subunit. Forms a bridge to the 30S subunit in the 70S ribosome.

One of the primary rRNA binding proteins. Required for association of the 30S and 50S subunits to form the 70S ribosome, for tRNA binding and peptide bond formation. It has been suggested to have peptidyltransferase activity; this is somewhat controversial. Makes several contacts with the 16S rRNA in the 70S ribosome. The protein is Large ribosomal subunit protein uL2 of Rhodopirellula baltica (strain DSM 10527 / NCIMB 13988 / SH1).